The sequence spans 101 residues: Protein Tat (101 aa).

The interaction with human CREBBP stretch occupies residues 1-24 (MEPIDPNLEPWNHPGSQPKTACNN). A transactivation region spans residues 1 to 48 (MEPIDPNLEPWNHPGSQPKTACNNCYCKQCCYHCQLCFTKKGLGISYG). Positions 22, 25, and 27 each coordinate Zn(2+). Residues 22-37 (CNNCYCKQCCYHCQLC) form a cysteine-rich region. The residue at position 28 (Lys-28) is an N6-acetyllysine; by host PCAF. Zn(2+) contacts are provided by Cys-30, His-33, Cys-34, and Cys-37. A core region spans residues 38–48 (FTKKGLGISYG). The interval 48–101 (GRRKRKQRRRTSESSQNHQDPVPKQPLSQPGGIETGQKKSKKEVESQTTSDQFA) is disordered. The Nuclear localization signal, RNA-binding (TAR), and protein transduction signature appears at 49–57 (RRKRKQRRR). An interaction with the host capping enzyme RNGTT region spans residues 49–86 (RRKRKQRRRTSESSQNHQDPVPKQPLSQPGGIETGQKK). At Lys-51 the chain carries N6-acetyllysine; by host EP300 and GCN5L2. An Asymmetric dimethylarginine; by host PRMT6 modification is found at Arg-52. Lys-71 participates in a covalent cross-link: Glycyl lysine isopeptide (Lys-Gly) (interchain with G-Cter in ubiquitin).

Belongs to the lentiviruses Tat family. As to quaternary structure, interacts with host CCNT1. Associates with the P-TEFb complex composed at least of Tat, P-TEFb (CDK9 and CCNT1), TAR RNA, RNA Pol II. Recruits the HATs CREBBP, TAF1/TFIID, EP300, PCAF and GCN5L2. Interacts with host KAT5/Tip60; this interaction targets the latter to degradation. Interacts with the host deacetylase SIRT1. Interacts with host capping enzyme RNGTT; this interaction stimulates RNGTT. Binds to host KDR, and to the host integrins ITGAV/ITGB3 and ITGA5/ITGB1. Interacts with host KPNB1/importin beta-1 without previous binding to KPNA1/importin alpha-1. Interacts with EIF2AK2. Interacts with host nucleosome assembly protein NAP1L1; this interaction may be required for the transport of Tat within the nucleus, since the two proteins interact at the nuclear rim. Interacts with host C1QBP/SF2P32; this interaction involves lysine-acetylated Tat. Interacts with the host chemokine receptors CCR2, CCR3 and CXCR4. Interacts with host DPP4/CD26; this interaction may trigger an anti-proliferative effect. Interacts with host LDLR. Interacts with the host extracellular matrix metalloproteinase MMP1. Interacts with host PRMT6; this interaction mediates Tat's methylation. Interacts with, and is ubiquitinated by MDM2/Hdm2. Interacts with host PSMC3 and HTATIP2. Interacts with STAB1; this interaction may overcome SATB1-mediated repression of IL2 and IL2RA (interleukin) in T cells by binding to the same domain than HDAC1. Interacts (when acetylated) with human CDK13, thereby increasing HIV-1 mRNA splicing and promoting the production of the doubly spliced HIV-1 protein Nef. Interacts with host TBP; this interaction modulates the activity of transcriptional pre-initiation complex. Interacts with host RELA. Post-translationally, asymmetrical arginine methylation by host PRMT6 seems to diminish the transactivation capacity of Tat and affects the interaction with host CCNT1. In terms of processing, polyubiquitination by host MDM2 does not target Tat to degradation, but activates its transactivation function and fosters interaction with CCNT1 and TAR RNA. Phosphorylated by EIF2AK2 on serine and threonine residues adjacent to the basic region important for TAR RNA binding and function. Phosphorylation of Tat by EIF2AK2 is dependent on the prior activation of EIF2AK2 by dsRNA.

It localises to the host nucleus. The protein localises to the host nucleolus. It is found in the host cytoplasm. The protein resides in the secreted. Its function is as follows. Transcriptional activator that increases RNA Pol II processivity, thereby increasing the level of full-length viral transcripts. Recognizes a hairpin structure at the 5'-LTR of the nascent viral mRNAs referred to as the transactivation responsive RNA element (TAR) and recruits the cyclin T1-CDK9 complex (P-TEFb complex) that will in turn hyperphosphorylate the RNA polymerase II to allow efficient elongation. The CDK9 component of P-TEFb and other Tat-activated kinases hyperphosphorylate the C-terminus of RNA Pol II that becomes stabilized and much more processive. Other factors such as HTATSF1/Tat-SF1, SUPT5H/SPT5, and HTATIP2 are also important for Tat's function. Besides its effect on RNA Pol II processivity, Tat induces chromatin remodeling of proviral genes by recruiting the histone acetyltransferases (HATs) CREBBP, EP300 and PCAF to the chromatin. This also contributes to the increase in proviral transcription rate, especially when the provirus integrates in transcriptionally silent region of the host genome. To ensure maximal activation of the LTR, Tat mediates nuclear translocation of NF-kappa-B by interacting with host RELA. Through its interaction with host TBP, Tat may also modulate transcription initiation. Tat can reactivate a latently infected cell by penetrating in it and transactivating its LTR promoter. In the cytoplasm, Tat is thought to act as a translational activator of HIV-1 mRNAs. Functionally, extracellular circulating Tat can be endocytosed by surrounding uninfected cells via the binding to several surface receptors such as CD26, CXCR4, heparan sulfate proteoglycans (HSPG) or LDLR. Neurons are rarely infected, but they internalize Tat via their LDLR. Through its interaction with nuclear HATs, Tat is potentially able to control the acetylation-dependent cellular gene expression. Modulates the expression of many cellular genes involved in cell survival, proliferation or in coding for cytokines or cytokine receptors. Tat plays a role in T-cell and neurons apoptosis. Tat induced neurotoxicity and apoptosis probably contribute to neuroAIDS. Circulating Tat also acts as a chemokine-like and/or growth factor-like molecule that binds to specific receptors on the surface of the cells, affecting many cellular pathways. In the vascular system, Tat binds to ITGAV/ITGB3 and ITGA5/ITGB1 integrins dimers at the surface of endothelial cells and competes with bFGF for heparin-binding sites, leading to an excess of soluble bFGF. The chain is Protein Tat from Pan troglodytes (Chimpanzee).